A 259-amino-acid chain; its full sequence is Insulin-induced gene 1 protein (259 aa).

Topologically, residues 1-66 (MPRLHDHVWN…ARPGSWHHDL (66 aa)) are cytoplasmic. Residues 36 to 55 (PGVPEPEHAPRGQRAGTTGC) form a disordered region. A helical membrane pass occupies residues 67–89 (VQRSLVLFSFGVVLALVLNLLQI). Residues 90–108 (QRNVTLFPDEVIATIFSSA) are Extracellular-facing. Residues 109-126 (WWVPPCCGTAAAVVGLLY) form a helical membrane-spanning segment. Residues 127 to 141 (PCIDSHLGEPHKFKR) lie on the Cytoplasmic side of the membrane. Residues Lys-138 and Lys-140 each participate in a glycyl lysine isopeptide (Lys-Gly) (interchain with G-Cter in ubiquitin) cross-link. The chain crosses the membrane as a helical span at residues 142–164 (EWASVMRCIAVFVGINHASAKLD). The Extracellular segment spans residues 165–167 (FAN). Residues 168–186 (NVQLSLTLAALSLGLWWTF) traverse the membrane as a helical segment. Topologically, residues 187 to 191 (DRSRS) are cytoplasmic. Phosphoserine is present on Ser-189. A helical membrane pass occupies residues 192–213 (GLGLGITIAFLATLITQFLVYN). The Extracellular segment spans residues 214-227 (GVYQYTSPDFLYIR). Residues 228–245 (SWLPCIFFSGGVTVGNIG) form a helical membrane-spanning segment. The Cytoplasmic portion of the chain corresponds to 246–259 (RQLAMGVPEKPHSD). Residues 253–259 (PEKPHSD) carry the KxHxx motif.

The protein belongs to the INSIG family. In terms of assembly, interacts with SCAP; interaction is direct and only takes place in the presence of sterols; it prevents interaction between SCAP and the coat protein complex II (COPII). Associates with the SCAP-SREBP complex (composed of SCAP and SREBF1/SREBP1 or SREBF2/SREBP2); association is mediated via its interaction with SCAP and only takes place in the presence of sterols. Interaction with SCAP is mutually exclusive with PAQR3. Interacts with HMGCR (via its SSD); the interaction, accelerated by sterols, leads to the recruitment of HMGCR to AMFR/gp78 for its ubiquitination by the sterol-mediated ERAD pathway. Interacts with AMFR/gp78 (via its membrane domain); the interaction recruits HMCR at the ER membrane for its ubiquitination and degradation by the sterol-mediated ERAD pathway. Interacts with SOAT2/ACAT2; leading to promote recruitment of AMFR/gp78 and subsequent ubiquitination of SOAT2/ACAT2. Interacts with RNF139. Interacts with RNF145. In terms of processing, phosphorylation at Ser-189 by PCK1 reduces binding to oxysterol, disrupting the interaction between INSIG1 and SCAP, thereby promoting nuclear translocation of SREBP proteins (SREBF1/SREBP1 or SREBF2/SREBP2) and subsequent transcription of downstream lipogenesis-related genes. Post-translationally, ubiquitinated by AMFR/gp78 in response to sterol deprivation, leading to its degradation: when the SCAP-SREBP complex becomes dissociated from INSIG1, INSIG1 is then ubiquitinated and degraded in proteasomes. Although ubiquitination is required for rapid INSIG1 degradation, it is not required for release of the SCAP-SREBP complex. Ubiquitinated by RNF139.

It localises to the endoplasmic reticulum membrane. Its function is as follows. Oxysterol-binding protein that mediates feedback control of cholesterol synthesis by controlling both endoplasmic reticulum to Golgi transport of SCAP and degradation of HMGCR. Acts as a negative regulator of cholesterol biosynthesis by mediating the retention of the SCAP-SREBP complex in the endoplasmic reticulum, thereby blocking the processing of sterol regulatory element-binding proteins (SREBPs) SREBF1/SREBP1 and SREBF2/SREBP2. Binds oxysterol, including 25-hydroxycholesterol, regulating interaction with SCAP and retention of the SCAP-SREBP complex in the endoplasmic reticulum. In presence of oxysterol, interacts with SCAP, retaining the SCAP-SREBP complex in the endoplasmic reticulum, thereby preventing SCAP from escorting SREBF1/SREBP1 and SREBF2/SREBP2 to the Golgi. Sterol deprivation or phosphorylation by PCK1 reduce oxysterol-binding, disrupting the interaction between INSIG1 and SCAP, thereby promoting Golgi transport of the SCAP-SREBP complex, followed by processing and nuclear translocation of SREBF1/SREBP1 and SREBF2/SREBP2. Also regulates cholesterol synthesis by regulating degradation of HMGCR: initiates the sterol-mediated ubiquitin-mediated endoplasmic reticulum-associated degradation (ERAD) of HMGCR via recruitment of the reductase to the ubiquitin ligases AMFR/gp78 and/or RNF139. Also regulates degradation of SOAT2/ACAT2 when the lipid levels are low: initiates the ubiquitin-mediated degradation of SOAT2/ACAT2 via recruitment of the ubiquitin ligases AMFR/gp78. This chain is Insulin-induced gene 1 protein, found in Mus musculus (Mouse).